We begin with the raw amino-acid sequence, 282 residues long: NADH-ubiquinone oxidoreductase chain 2 (282 aa).

7 helical membrane passes run 17–37, 58–78, 87–107, 115–135, 166–186, 202–222, and 232–252; these read ILTN…VVFI, SLGL…IILL, FWIF…FLTF, ILLQ…LLIC, FSMF…VLLI, TTLV…IFSL, and FTLF…FWLI.

The protein belongs to the complex I subunit 2 family.

It localises to the mitochondrion inner membrane. The catalysed reaction is a ubiquinone + NADH + 5 H(+)(in) = a ubiquinol + NAD(+) + 4 H(+)(out). Functionally, core subunit of the mitochondrial membrane respiratory chain NADH dehydrogenase (Complex I) that is believed to belong to the minimal assembly required for catalysis. Complex I functions in the transfer of electrons from NADH to the respiratory chain. The immediate electron acceptor for the enzyme is believed to be ubiquinone. The protein is NADH-ubiquinone oxidoreductase chain 2 of Caenorhabditis elegans.